A 224-amino-acid chain; its full sequence is Rhodanese-like domain-containing protein 14, chloroplastic (224 aa).

The N-terminal 48 residues, 1 to 48 (MASLTSIATPYPSSSQALRLKSSGNTLFSAGVRSAAMVSGHKTLKIQC), are a transit peptide targeting the chloroplast. The region spanning 87–220 (KENNFVILDV…WGKEGLPVET (134 aa)) is the Rhodanese domain. The active-site Cysteine persulfide intermediate is the Cys166.

It is found in the plastid. It localises to the chloroplast. This chain is Rhodanese-like domain-containing protein 14, chloroplastic, found in Arabidopsis thaliana (Mouse-ear cress).